A 220-amino-acid chain; its full sequence is Putative F-box protein At3g20705 (220 aa).

An F-box domain is found at M1–I51.

The polypeptide is Putative F-box protein At3g20705 (Arabidopsis thaliana (Mouse-ear cress)).